The following is a 490-amino-acid chain: Limb region 1 protein (490 aa).

The Extracellular segment spans residues 1–19 (MEGQDEVSAREQHFHSQVR). A helical transmembrane segment spans residues 20 to 40 (ESTICFLLFAILYIVSYFIII). The Cytoplasmic segment spans residues 41-62 (RYKRKSDEQEDEDAVVNRISLF). The helical transmembrane segment at 63 to 83 (LSTFTLAVSAGAVLLLPFSII) threads the bilayer. Residues 84–110 (SNEILLAFPHNYYIQWLNGSLIHGLWN) are Extracellular-facing. The helical transmembrane segment at 111 to 131 (LASLFSNLCLFVLMPFAFFFL) threads the bilayer. The Cytoplasmic portion of the chain corresponds to 132–151 (ESEGFAGLKKGIRARILETL). Residues 152–172 (VMLLLLALLILGMVWVASALI) traverse the membrane as a helical segment. At 173–187 (DSDAASMESLYDLWE) the chain is on the extracellular side. The helical transmembrane segment at 188–208 (FYLPYLYSCISLMGCLLLLLC) threads the bilayer. Residues 209–291 (TPVGLSRMFT…RKKASAWERN (83 aa)) are Cytoplasmic-facing. Residues 256–287 (SSVEYNVMELEQELENVKILKTKLERRKKASA) adopt a coiled-coil conformation. The chain crosses the membrane as a helical span at residues 292-312 (LVYPAVMVLLLIETSISVLLV). Residues 313–339 (ACNILCLLVDETAMPKGTRGPGIGSAS) are Extracellular-facing. Residues 340-360 (LSTFGFVGAALEIILIFYLMV) traverse the membrane as a helical segment. Residues 361-383 (SSVVGFYSLRFFGNFTPKKDDTT) are Cytoplasmic-facing. Residues 384 to 404 (MTKIIGNCVSILVLSSALPVM) traverse the membrane as a helical segment. Residues 405-426 (SRTLGITRFDLLGDFGRFNWLG) lie on the Extracellular side of the membrane. Residues 427-447 (NFYIVLSYNLLFAIMTTLCLI) traverse the membrane as a helical segment. Residues 448 to 490 (RKFTSAVREELFKALGLHKLHLSDTSRDSETTKPSANGHQKAL) lie on the Cytoplasmic side of the membrane.

It belongs to the LIMR family.

It is found in the membrane. Functionally, putative membrane receptor. This Mus musculus (Mouse) protein is Limb region 1 protein (Lmbr1).